Consider the following 101-residue polypeptide: Small ribosomal subunit protein uS14 (101 aa).

The protein belongs to the universal ribosomal protein uS14 family. In terms of assembly, part of the 30S ribosomal subunit. Contacts proteins S3 and S10.

In terms of biological role, binds 16S rRNA, required for the assembly of 30S particles and may also be responsible for determining the conformation of the 16S rRNA at the A site. This chain is Small ribosomal subunit protein uS14, found in Shewanella denitrificans (strain OS217 / ATCC BAA-1090 / DSM 15013).